The sequence spans 313 residues: GTPase Era (313 aa).

Residues 13–186 (RSGFVSFVGR…ADLLVGLLPE (174 aa)) form the Era-type G domain. A G1 region spans residues 21–28 (GRPNAGKS). 21-28 (GRPNAGKS) contributes to the GTP binding site. Residues 47-51 (QTTRT) form a G2 region. Residues 68-71 (DTPG) are G3. GTP is bound by residues 68–72 (DTPGL) and 131–134 (TKTD). Residues 131 to 134 (TKTD) are G4. Positions 165–167 (VSA) are G5. Residues 217–299 (LRDELPHSVA…YLDLHVKIAK (83 aa)) enclose the KH type-2 domain.

The protein belongs to the TRAFAC class TrmE-Era-EngA-EngB-Septin-like GTPase superfamily. Era GTPase family. Monomer.

The protein resides in the cytoplasm. The protein localises to the cell membrane. Its function is as follows. An essential GTPase that binds both GDP and GTP, with rapid nucleotide exchange. Plays a role in 16S rRNA processing and 30S ribosomal subunit biogenesis and possibly also in cell cycle regulation and energy metabolism. The polypeptide is GTPase Era (Nocardioides sp. (strain ATCC BAA-499 / JS614)).